Consider the following 489-residue polypeptide: Glutamyl-tRNA(Gln) amidotransferase subunit A (489 aa).

Residues Lys-77 and Ser-152 each act as charge relay system in the active site. Ser-176 serves as the catalytic Acyl-ester intermediate.

It belongs to the amidase family. GatA subfamily. In terms of assembly, heterotrimer of A, B and C subunits.

The catalysed reaction is L-glutamyl-tRNA(Gln) + L-glutamine + ATP + H2O = L-glutaminyl-tRNA(Gln) + L-glutamate + ADP + phosphate + H(+). Its function is as follows. Allows the formation of correctly charged Gln-tRNA(Gln) through the transamidation of misacylated Glu-tRNA(Gln) in organisms which lack glutaminyl-tRNA synthetase. The reaction takes place in the presence of glutamine and ATP through an activated gamma-phospho-Glu-tRNA(Gln). In Levilactobacillus brevis (strain ATCC 367 / BCRC 12310 / CIP 105137 / JCM 1170 / LMG 11437 / NCIMB 947 / NCTC 947) (Lactobacillus brevis), this protein is Glutamyl-tRNA(Gln) amidotransferase subunit A.